We begin with the raw amino-acid sequence, 640 residues long: Dextranase (640 aa).

A signal peptide spans 1-32 (MPGTGLGRLAKHVTAAAAVFLISTGAVLPAQA).

Belongs to the glycosyl hydrolase 49 family.

Its subcellular location is the secreted. It catalyses the reaction Endohydrolysis of (1-&gt;6)-alpha-D-glucosidic linkages in dextran.. The sequence is that of Dextranase from Arthrobacter globiformis.